The sequence spans 1261 residues: ABC-type transmembrane transporter verA (1261 aa).

A helical transmembrane segment spans residues Ile41 to Leu61. The 294-residue stretch at Ile41–Lys334 folds into the ABC transmembrane type-1 1 domain. Asn67 is a glycosylation site (N-linked (GlcNAc...) asparagine). 5 helical membrane-spanning segments follow: residues Leu92–Phe112, Leu166–Gln186, Leu190–Ser210, Phe270–Phe290, and Ile308–Asn328. Residues Val374–Ala618 form the ABC transporter 1 domain. N-linked (GlcNAc...) asparagine glycosylation occurs at Asn396. Gly409–Ser416 serves as a coordination point for ATP. A glycan (N-linked (GlcNAc...) asparagine) is linked at Asn463. 6 helical membrane-spanning segments follow: residues Tyr686–Val706, Leu734–Met754, Met808–Tyr828, Trp830–Leu850, Val913–Phe933, and Phe950–Phe970. The region spanning Leu691–Lys976 is the ABC transmembrane type-1 2 domain. N-linked (GlcNAc...) asparagine glycosylation is found at Asn1007 and Asn1021. The 239-residue stretch at Val1017–Ser1255 folds into the ABC transporter 2 domain. Gly1052–Ser1059 is an ATP binding site. N-linked (GlcNAc...) asparagine glycosylation is present at Asn1106.

It belongs to the ABC transporter superfamily. ABCB family. Multidrug resistance exporter (TC 3.A.1.201) subfamily.

It localises to the cell membrane. In terms of biological role, ABC-type transmembrane transporter; part of the gene cluster that mediates the biosynthesis of 11'-deoxyverticillin A, one of the dimeric epipolythiodioxopiperazines (ETPs) from the verticillin family that are toxic secondary metabolites. The verA multidrug transporter is probably involved in the secretion of 11'-deoxyverticillin A. The sequence is that of ABC-type transmembrane transporter verA from Clonostachys rogersoniana.